The primary structure comprises 630 residues: Transcription factor MYC1 (630 aa).

Disordered regions lie at residues 356–398 (FGDS…NNEE) and 430–463 (VKEA…EAER). Over residues 440 to 449 (KPRKRGRKPA) the composition is skewed to basic residues. Over residues 450–463 (NGREEPLNHVEAER) the composition is skewed to basic and acidic residues. Residues 453–466 (EEPLNHVEAERQRR) are basic motif; degenerate. Residues 453–502 (EEPLNHVEAERQRREKLNQRFYALRAVVPNVSKMDKASLLGDAIAYINEL) form the bHLH domain. The interval 467 to 502 (EKLNQRFYALRAVVPNVSKMDKASLLGDAIAYINEL) is helix-loop-helix motif.

In terms of tissue distribution, highly expressed in trichomes and at lower levels in leaves and flowers. Expressed at low levels in roots, stems, leaves, flowers and fruits.

Its subcellular location is the nucleus. Its function is as follows. Transcriptional activator that binds to the G-box motif (5'-AACGTG-3') found in a number of promoters of jasmonate-induced genes. Transcription activator involved in the transcriptional regulation of terpene biosynthesis in glandular trichomes. Binds to the promoter of the linalool synthase TPS5 and promotes TPS5 gene transactivation. Acts synergistically with EOT1 in the transactivation of TPS5. Involved in type VI glandular trichome development. Involved in the activation of terpene synthases required for volatile mono- and sesquiterpenes synthesis by the glandular cells of type VI trichomes. This chain is Transcription factor MYC1, found in Solanum lycopersicum (Tomato).